Here is a 358-residue protein sequence, read N- to C-terminus: tRNA-specific 2-thiouridylase MnmA (358 aa).

Residues 8–15 (GMSGGVDS) and Met-34 each bind ATP. Cys-103 functions as the Nucleophile in the catalytic mechanism. Cys-103 and Cys-199 form a disulfide bridge. Gly-127 lines the ATP pocket. The interaction with tRNA stretch occupies residues 149–151 (KDQ). Cys-199 functions as the Cysteine persulfide intermediate in the catalytic mechanism. Positions 305-306 (RY) are interaction with tRNA.

It belongs to the MnmA/TRMU family.

The protein localises to the cytoplasm. The enzyme catalyses S-sulfanyl-L-cysteinyl-[protein] + uridine(34) in tRNA + AH2 + ATP = 2-thiouridine(34) in tRNA + L-cysteinyl-[protein] + A + AMP + diphosphate + H(+). Its function is as follows. Catalyzes the 2-thiolation of uridine at the wobble position (U34) of tRNA, leading to the formation of s(2)U34. This chain is tRNA-specific 2-thiouridylase MnmA, found in Clostridium beijerinckii (strain ATCC 51743 / NCIMB 8052) (Clostridium acetobutylicum).